The sequence spans 98 residues: Feather beta keratin (98 aa).

Position 2 is an N-acetylserine (Ser2).

This sequence belongs to the avian keratin family. The avian keratins (F-ker, S-ker, C-ker and B-ker) are a complex mixture of very similar polypeptides.

In Mycteria americana (Wood stork), this protein is Feather beta keratin.